Reading from the N-terminus, the 129-residue chain is Small ribosomal subunit protein uS11 (129 aa).

The protein belongs to the universal ribosomal protein uS11 family. In terms of assembly, part of the 30S ribosomal subunit. Interacts with proteins S7 and S18. Binds to IF-3.

In terms of biological role, located on the platform of the 30S subunit, it bridges several disparate RNA helices of the 16S rRNA. Forms part of the Shine-Dalgarno cleft in the 70S ribosome. In Stenotrophomonas maltophilia (strain R551-3), this protein is Small ribosomal subunit protein uS11.